The following is a 286-amino-acid chain: Polyamine aminopropyltransferase (286 aa).

The PABS domain maps to Asp-2 to Lys-237. Gln-31 is a binding site for S-methyl-5'-thioadenosine. Spermidine is bound at residue Asp-86. S-methyl-5'-thioadenosine-binding positions include Glu-106 and Asn-137–Gly-138. Asp-155 serves as the catalytic Proton acceptor.

This sequence belongs to the spermidine/spermine synthase family. In terms of assembly, homodimer or homotetramer.

The protein resides in the cytoplasm. The enzyme catalyses S-adenosyl 3-(methylsulfanyl)propylamine + putrescine = S-methyl-5'-thioadenosine + spermidine + H(+). It functions in the pathway amine and polyamine biosynthesis; spermidine biosynthesis; spermidine from putrescine: step 1/1. Its function is as follows. Catalyzes the irreversible transfer of a propylamine group from the amino donor S-adenosylmethioninamine (decarboxy-AdoMet) to putrescine (1,4-diaminobutane) to yield spermidine. In Streptococcus pneumoniae serotype 4 (strain ATCC BAA-334 / TIGR4), this protein is Polyamine aminopropyltransferase.